The chain runs to 146 residues: Small ribosomal subunit protein bS6 (146 aa).

Positions 100-146 (QSAMMRKRDDDDRGDRPDRGDRGRGPRPDRPPRRPRDDAAASDEGGF) are disordered. Basic and acidic residues predominate over residues 105–138 (RKRDDDDRGDRPDRGDRGRGPRPDRPPRRPRDDA).

The protein belongs to the bacterial ribosomal protein bS6 family.

Binds together with bS18 to 16S ribosomal RNA. The sequence is that of Small ribosomal subunit protein bS6 from Methylocella silvestris (strain DSM 15510 / CIP 108128 / LMG 27833 / NCIMB 13906 / BL2).